The chain runs to 238 residues: Orotidine 5'-phosphate decarboxylase (238 aa).

Residues Asp10, Lys32, 59–68 (DLKLHDIPNT), Thr122, Arg184, Gln193, Gly213, and Arg214 contribute to the substrate site. The active-site Proton donor is Lys61.

It belongs to the OMP decarboxylase family. Type 1 subfamily. Homodimer.

The catalysed reaction is orotidine 5'-phosphate + H(+) = UMP + CO2. Its pathway is pyrimidine metabolism; UMP biosynthesis via de novo pathway; UMP from orotate: step 2/2. Functionally, catalyzes the decarboxylation of orotidine 5'-monophosphate (OMP) to uridine 5'-monophosphate (UMP). The sequence is that of Orotidine 5'-phosphate decarboxylase from Bacillus cereus (strain B4264).